The chain runs to 354 residues: Glucose 1-dehydrogenase (354 aa).

A disordered region spans residues 1–27; sequence MKVIGVTRDDDGPQLLERERPSPDPGE. The span at 7 to 22 shows a compositional bias: basic and acidic residues; it reads TRDDDGPQLLERERPS. Asp38 contributes to the Zn(2+) binding site. Thr40 lines the substrate pocket. Positions 63 and 64 each coordinate Zn(2+). A disordered region spans residues 91 to 110; that stretch reads PNGETNEYFRRGEPDMAPDG. Glu114 and Glu150 together coordinate substrate. Residue Glu150 participates in Zn(2+) binding. NADP(+)-binding positions include 181 to 184, 204 to 205, 269 to 271, and 298 to 300; these read NGSL, RR, LGI, and TVN. Asn300 contacts substrate.

It belongs to the zinc-containing alcohol dehydrogenase family. Glucose 1-dehydrogenase subfamily. It depends on Zn(2+) as a cofactor.

The catalysed reaction is D-glucose + NAD(+) = D-glucono-1,5-lactone + NADH + H(+). The enzyme catalyses D-glucose + NADP(+) = D-glucono-1,5-lactone + NADPH + H(+). Its function is as follows. Catalyzes the NAD(P)(+)-dependent oxidation of D-glucose to D-gluconate via gluconolactone. Can utilize both NAD(+) and NADP(+) as electron acceptor. Is involved in the degradation of glucose through a modified Entner-Doudoroff pathway. This is Glucose 1-dehydrogenase from Haloarcula marismortui (strain ATCC 43049 / DSM 3752 / JCM 8966 / VKM B-1809) (Halobacterium marismortui).